A 443-amino-acid chain; its full sequence is D-inositol 3-phosphate glycosyltransferase (443 aa).

Histidine 30 serves as a coordination point for 1D-myo-inositol 3-phosphate. Residues 36-37 (QP) and glycine 44 each bind UDP-N-acetyl-alpha-D-glucosamine. 1D-myo-inositol 3-phosphate is bound by residues 41 to 46 (DAGGMN), lysine 99, tyrosine 132, threonine 156, and arginine 176. UDP-N-acetyl-alpha-D-glucosamine is bound by residues arginine 250, lysine 255, and arginine 316. Positions 325, 326, and 328 each coordinate Mg(2+). Positions 338 and 346 each coordinate UDP-N-acetyl-alpha-D-glucosamine. Threonine 352 provides a ligand contact to Mg(2+).

It belongs to the glycosyltransferase group 1 family. MshA subfamily. Homodimer.

It carries out the reaction 1D-myo-inositol 3-phosphate + UDP-N-acetyl-alpha-D-glucosamine = 1D-myo-inositol 2-acetamido-2-deoxy-alpha-D-glucopyranoside 3-phosphate + UDP + H(+). Functionally, catalyzes the transfer of a N-acetyl-glucosamine moiety to 1D-myo-inositol 3-phosphate to produce 1D-myo-inositol 2-acetamido-2-deoxy-glucopyranoside 3-phosphate in the mycothiol biosynthesis pathway. The sequence is that of D-inositol 3-phosphate glycosyltransferase from Stackebrandtia nassauensis (strain DSM 44728 / CIP 108903 / NRRL B-16338 / NBRC 102104 / LLR-40K-21).